We begin with the raw amino-acid sequence, 384 residues long: MTAATLVTLALSLSLAQHDAAPAPAAAPVEQHGAPAPEAAAPDAHAAPAGEHGAAVEAHAAAAGEHGDAAGHEGGHDESLGAVMMHHVTDGYVIEHPGFCHGALAWNCEWDLRETFGDALRFGALDMTPTKHVMMMWFASALLLVVVLAAVRKKSLVPRGLYNFIEVLVAFVRNEIAVKNIGERDADRFVPYLVTAFFFILFLNLFGLIPFSATATANLSVTVALALFTFLITQYAAIRAMGVGGYLAHLTGGVPKSLAPLWIIMIPVEFLGLFTKPFALTVRLFANMVAGHFVILALLGLIFALGTPWVAFGSVPMALGIFLLELFVAFVQAYIFTMLSSLFIGAGLVHHGDDHGHAEEHGHAGPGMGSEHGSHVAGASPGHG.

The segment at 22–60 (PAPAAAPVEQHGAPAPEAAAPDAHAAPAGEHGAAVEAHA) is disordered. The next 6 helical transmembrane spans lie at 131–151 (KHVMMMWFASALLLVVVLAAV), 189–209 (FVPYLVTAFFFILFLNLFGLI), 218–238 (NLSVTVALALFTFLITQYAAI), 258–278 (LAPLWIIMIPVEFLGLFTKPF), 293–313 (FVILALLGLIFALGTPWVAFG), and 319–339 (LGIFLLELFVAFVQAYIFTML). The segment at 355–384 (HGHAEEHGHAGPGMGSEHGSHVAGASPGHG) is disordered.

This sequence belongs to the ATPase A chain family. As to quaternary structure, F-type ATPases have 2 components, CF(1) - the catalytic core - and CF(0) - the membrane proton channel. CF(1) has five subunits: alpha(3), beta(3), gamma(1), delta(1), epsilon(1). CF(0) has three main subunits: a(1), b(2) and c(9-12). The alpha and beta chains form an alternating ring which encloses part of the gamma chain. CF(1) is attached to CF(0) by a central stalk formed by the gamma and epsilon chains, while a peripheral stalk is formed by the delta and b chains.

It is found in the cell inner membrane. Key component of the proton channel; it plays a direct role in the translocation of protons across the membrane. This Anaeromyxobacter dehalogenans (strain 2CP-1 / ATCC BAA-258) protein is ATP synthase subunit a.